Here is a 544-residue protein sequence, read N- to C-terminus: CTP synthase (544 aa).

The amidoligase domain stretch occupies residues 1 to 265 (MTKFIFVTGG…DDIICEHLDL (265 aa)). S13 contributes to the CTP binding site. S13 contributes to the UTP binding site. Residues 14–19 (SLGKGI) and D71 contribute to the ATP site. D71 and E139 together coordinate Mg(2+). CTP is bound by residues 146–148 (DIE), 186–191 (KTKPTQ), and K222. UTP contacts are provided by residues 186–191 (KTKPTQ) and K222. Positions 290–542 (NIAMVGKYVD…VEAALAYQAD (253 aa)) constitute a Glutamine amidotransferase type-1 domain. G351 contributes to the L-glutamine binding site. The active-site Nucleophile; for glutamine hydrolysis is C378. Residues 379 to 382 (LGMQ), E402, and R469 contribute to the L-glutamine site. Catalysis depends on residues H515 and E517.

It belongs to the CTP synthase family. Homotetramer.

The catalysed reaction is UTP + L-glutamine + ATP + H2O = CTP + L-glutamate + ADP + phosphate + 2 H(+). It carries out the reaction L-glutamine + H2O = L-glutamate + NH4(+). It catalyses the reaction UTP + NH4(+) + ATP = CTP + ADP + phosphate + 2 H(+). It functions in the pathway pyrimidine metabolism; CTP biosynthesis via de novo pathway; CTP from UDP: step 2/2. Its activity is regulated as follows. Allosterically activated by GTP, when glutamine is the substrate; GTP has no effect on the reaction when ammonia is the substrate. The allosteric effector GTP functions by stabilizing the protein conformation that binds the tetrahedral intermediate(s) formed during glutamine hydrolysis. Inhibited by the product CTP, via allosteric rather than competitive inhibition. Its function is as follows. Catalyzes the ATP-dependent amination of UTP to CTP with either L-glutamine or ammonia as the source of nitrogen. Regulates intracellular CTP levels through interactions with the four ribonucleotide triphosphates. The chain is CTP synthase from Laribacter hongkongensis (strain HLHK9).